We begin with the raw amino-acid sequence, 291 residues long: MAGTKEIRTKIKSVQNTRKITKAMEMVAASKMRRAQERMRSARPYAEKIRNVAAHMAQANPEYQHPFMVKRDVKRAGLIVVTTDKGLCGGLNTNVLRAVTNQLRDLQNKGVESQATAIGSKGMQFLGRIGAKVVSNVVHLGDTPHLEKLIGAIKVQLDAFTAGEIDAVYLAYTRFINTMRQEPVVEQLLPLTADKLTQTAAEKQAYSWDYIYEPDAQTVVDELLIRYVEALVYQAVAENMASEQSARMVAMKAASDNAKNVIGELQLVYNKTRQAAITKELSEIVGGAAAV.

This sequence belongs to the ATPase gamma chain family. As to quaternary structure, F-type ATPases have 2 components, CF(1) - the catalytic core - and CF(0) - the membrane proton channel. CF(1) has five subunits: alpha(3), beta(3), gamma(1), delta(1), epsilon(1). CF(0) has three main subunits: a, b and c.

It localises to the cell inner membrane. In terms of biological role, produces ATP from ADP in the presence of a proton gradient across the membrane. The gamma chain is believed to be important in regulating ATPase activity and the flow of protons through the CF(0) complex. In Ralstonia nicotianae (strain ATCC BAA-1114 / GMI1000) (Ralstonia solanacearum), this protein is ATP synthase gamma chain.